The following is a 149-amino-acid chain: Transcriptional repressor NrdR (149 aa).

Residues 3–34 (CPFCAAVDTKVIDSRLVGDGSQVRRRRQCLEC) fold into a zinc finger. The ATP-cone domain maps to 49–139 (PRVIKSDDIR…VYRSFEDIRE (91 aa)).

It belongs to the NrdR family. Requires Zn(2+) as cofactor.

Negatively regulates transcription of bacterial ribonucleotide reductase nrd genes and operons by binding to NrdR-boxes. This is Transcriptional repressor NrdR from Photorhabdus laumondii subsp. laumondii (strain DSM 15139 / CIP 105565 / TT01) (Photorhabdus luminescens subsp. laumondii).